The chain runs to 100 residues: High mobility group protein C (100 aa).

The segment at residues 12–80 (PKRPLSAFFL…KYEKDMQAYE (69 aa)) is a DNA-binding region (HMG box). The interval 81 to 100 (KKYGKPEKQKKIKKNKKGSK) is disordered. Residues 90–100 (KKIKKNKKGSK) are compositionally biased toward basic residues.

The protein localises to the nucleus. The protein resides in the chromosome. In Tetrahymena thermophila, this protein is High mobility group protein C.